The primary structure comprises 302 residues: Probable 2-(5''-triphosphoribosyl)-3'-dephosphocoenzyme-A synthase (302 aa).

The protein belongs to the CitG/MdcB family.

It carries out the reaction 3'-dephospho-CoA + ATP = 2'-(5''-triphospho-alpha-D-ribosyl)-3'-dephospho-CoA + adenine. The sequence is that of Probable 2-(5''-triphosphoribosyl)-3'-dephosphocoenzyme-A synthase from Albidiferax ferrireducens (strain ATCC BAA-621 / DSM 15236 / T118) (Rhodoferax ferrireducens).